Reading from the N-terminus, the 115-residue chain is Holo-[acyl-carrier-protein] synthase (115 aa).

Residues Asp-8 and Glu-50 each coordinate Mg(2+).

It belongs to the P-Pant transferase superfamily. AcpS family. Requires Mg(2+) as cofactor.

The protein localises to the cytoplasm. The catalysed reaction is apo-[ACP] + CoA = holo-[ACP] + adenosine 3',5'-bisphosphate + H(+). Functionally, transfers the 4'-phosphopantetheine moiety from coenzyme A to a Ser of acyl-carrier-protein. This is Holo-[acyl-carrier-protein] synthase from Cutibacterium acnes (strain DSM 16379 / KPA171202) (Propionibacterium acnes).